A 348-amino-acid chain; its full sequence is GTP 3',8-cyclase (348 aa).

Positions 24 to 242 (PFGRAVTYLR…EKQFTLTDID (219 aa)) constitute a Radical SAM core domain. R33 serves as a coordination point for GTP. Positions 40 and 44 each coordinate [4Fe-4S] cluster. Y46 lines the S-adenosyl-L-methionine pocket. C47 lines the [4Fe-4S] cluster pocket. Residue R82 coordinates GTP. G86 serves as a coordination point for S-adenosyl-L-methionine. T115 contributes to the GTP binding site. S139 serves as a coordination point for S-adenosyl-L-methionine. Position 175 (K175) interacts with GTP. M209 is an S-adenosyl-L-methionine binding site. Residues C272 and C275 each contribute to the [4Fe-4S] cluster site. 277 to 279 (RVR) contacts GTP. [4Fe-4S] cluster is bound at residue C289.

This sequence belongs to the radical SAM superfamily. MoaA family. Monomer and homodimer. [4Fe-4S] cluster serves as cofactor.

The enzyme catalyses GTP + AH2 + S-adenosyl-L-methionine = (8S)-3',8-cyclo-7,8-dihydroguanosine 5'-triphosphate + 5'-deoxyadenosine + L-methionine + A + H(+). The protein operates within cofactor biosynthesis; molybdopterin biosynthesis. Functionally, catalyzes the cyclization of GTP to (8S)-3',8-cyclo-7,8-dihydroguanosine 5'-triphosphate. In Rhizobium etli (strain CIAT 652), this protein is GTP 3',8-cyclase.